Here is a 342-residue protein sequence, read N- to C-terminus: Methylthioribose-1-phosphate isomerase (342 aa).

Residues 49-51 (RGA), arginine 86, and glutamine 187 contribute to the substrate site. The Proton donor role is filled by aspartate 228. 238 to 239 (NK) lines the substrate pocket.

This sequence belongs to the eIF-2B alpha/beta/delta subunits family. MtnA subfamily.

It carries out the reaction 5-(methylsulfanyl)-alpha-D-ribose 1-phosphate = 5-(methylsulfanyl)-D-ribulose 1-phosphate. It functions in the pathway amino-acid biosynthesis; L-methionine biosynthesis via salvage pathway; L-methionine from S-methyl-5-thio-alpha-D-ribose 1-phosphate: step 1/6. Its function is as follows. Catalyzes the interconversion of methylthioribose-1-phosphate (MTR-1-P) into methylthioribulose-1-phosphate (MTRu-1-P). This chain is Methylthioribose-1-phosphate isomerase, found in Klebsiella pneumoniae subsp. pneumoniae (strain ATCC 700721 / MGH 78578).